The sequence spans 1055 residues: Putative helicase/primase complex protein (1055 aa).

Belongs to the asfivirus F1055L family.

Its function is as follows. May be involved in DNA replication. The sequence is that of Putative helicase/primase complex protein from Ornithodoros (relapsing fever ticks).